Consider the following 473-residue polypeptide: Proline transporter 1 (473 aa).

A compositionally biased stretch (basic and acidic residues) spans 1-11 (MDQHQLDEENQ). A disordered region spans residues 1 to 31 (MDQHQLDEENQRAALFHSSAPSSSLGADGEE). 11 consecutive transmembrane segments (helical) span residues 65-85 (PWYQ…VLGY), 88-108 (SIMV…AAAI), 145-165 (LTWA…IILA), 188-208 (IALS…LSAL), 210-230 (IWLG…FVMS), 252-272 (IFTT…GMLP), 290-310 (LWFQ…MGYW), 333-353 (VANL…ASPM), 378-398 (VGVR…LPFL), 401-421 (FMSL…ANHM), and 437-457 (WHWL…VAAV).

It belongs to the amino acid/polyamine transporter 2 family. Amino acid/auxin permease (AAAP) (TC 2.A.18.3) subfamily. In terms of tissue distribution, expressed in roots, leaf blades and sheaths, stems and young panicle.

It localises to the cell membrane. Proline transporter that mediates proline transport across the plasma membrane when expressed in a heterologous system (Xenopus oocytes). The chain is Proline transporter 1 (PROT1) from Oryza sativa subsp. japonica (Rice).